The following is a 267-amino-acid chain: Actin maturation protease (267 aa).

Positions 1-32 (MSNISSVAPPPPPPPMIVTPSTPATTKERPVG) are disordered. Pro residues predominate over residues 8 to 17 (APPPPPPPMI). The tract at residues 74 to 188 (SIVQVGPTCG…WALIVGYLVD (115 aa)) is peptidase C39-like. Cysteine 82 is an active-site residue.

It belongs to the ACTMAP family.

The enzyme catalyses N-terminal N(alpha)-acetyl-L-cysteinyl-L-aspartyl-[protein] + H2O = N-terminal L-aspartyl-[protein] + N-acetyl-L-cysteine. Its function is as follows. Actin maturation protease that specifically mediates the cleavage of immature acetylated N-terminal actin, thereby contributing to actin maturation. The protein is Actin maturation protease of Drosophila melanogaster (Fruit fly).